The primary structure comprises 118 residues: Small ribosomal subunit protein uS13 (118 aa).

Positions Arg-93–Lys-118 are disordered.

The protein belongs to the universal ribosomal protein uS13 family. As to quaternary structure, part of the 30S ribosomal subunit. Forms a loose heterodimer with protein S19. Forms two bridges to the 50S subunit in the 70S ribosome.

Its function is as follows. Located at the top of the head of the 30S subunit, it contacts several helices of the 16S rRNA. In the 70S ribosome it contacts the 23S rRNA (bridge B1a) and protein L5 of the 50S subunit (bridge B1b), connecting the 2 subunits; these bridges are implicated in subunit movement. Contacts the tRNAs in the A and P-sites. This is Small ribosomal subunit protein uS13 from Pseudomonas syringae pv. tomato (strain ATCC BAA-871 / DC3000).